Here is a 449-residue protein sequence, read N- to C-terminus: Tubulin beta-2 chain (449 aa).

GTP contacts are provided by Q11 and E69. Mg(2+) is bound at residue E69. H137 is modified (methylhistidine). Residues S138, G142, T143, G144, N204, and N226 each contribute to the GTP site.

This sequence belongs to the tubulin family. As to quaternary structure, dimer of alpha and beta chains. A typical microtubule is a hollow water-filled tube with an outer diameter of 25 nm and an inner diameter of 15 nM. Alpha-beta heterodimers associate head-to-tail to form protofilaments running lengthwise along the microtubule wall with the beta-tubulin subunit facing the microtubule plus end conferring a structural polarity. Microtubules usually have 13 protofilaments but different protofilament numbers can be found in some organisms and specialized cells. It depends on Mg(2+) as a cofactor.

It is found in the cytoplasm. It localises to the cytoskeleton. Its function is as follows. Tubulin is the major constituent of microtubules, a cylinder consisting of laterally associated linear protofilaments composed of alpha- and beta-tubulin heterodimers. Microtubules grow by the addition of GTP-tubulin dimers to the microtubule end, where a stabilizing cap forms. Below the cap, tubulin dimers are in GDP-bound state, owing to GTPase activity of alpha-tubulin. In Emericella nidulans (strain FGSC A4 / ATCC 38163 / CBS 112.46 / NRRL 194 / M139) (Aspergillus nidulans), this protein is Tubulin beta-2 chain (tubC).